The following is an 836-amino-acid chain: Homeobox-leucine zipper protein ATHB-15 (836 aa).

The homeobox DNA-binding region spans 14–77; that stretch reads DNGKYVRYTP…NRRCREKQRK (64 aa). Residues 72–115 are a coiled coil; it reads REKQRKEASRLQAVNRKLTAMNKLLMEENDRLQKQVSQLVHENS. Positions 151 to 379 constitute an START domain; sequence RDASPAGLLS…IAQEVTQTNS (229 aa).

Belongs to the HD-ZIP homeobox family. Class III subfamily. As to quaternary structure, interacts with ESR1 and ESR2. Interacts with ZPR3. Highly expressed the developing vascular elements and the adaxial portion of cotyledons. Expressed in developing ovules, stamens and carpels. Expressed in procambium and shoot meristem.

Its subcellular location is the nucleus. Its function is as follows. Probable transcription factor involved in the regulation of meristem development to promote lateral organ formation. May regulates procambial and vascular tissue formation or maintenance, and vascular development in inflorescence stems. This chain is Homeobox-leucine zipper protein ATHB-15 (ATHB-15), found in Arabidopsis thaliana (Mouse-ear cress).